An 842-amino-acid chain; its full sequence is MSTLQSLIIDGFHGNGFHMIEEYLQQKESHVPQKYNHLLLHHLDRLIKEELDKNEFQNCSLLLKCIQRFFRDDPDHEEPLLIQQGLIPKMVSWFEIITGLLITKVLASEALLTNALEDFLDTALIISRHSRKATVQMLDSFILRLGFLVAEDSVKPSIQQETLATLNCILNAAPQEERRKLSSAEGACCLMKELARTILTVGDYSQQVALSEALCRMSVGRQRNDLAMQWFENTALAEAFKKIKNREFETDCRQFLNFLNNRLGNQRRVYSFPCLAAFADGQEMRKPADEKLEEFWIDFNLGSQSVTFYIDNAESALWEPVKLLKEAMVKFIIIENDRIKMFIVYLKQPIVISKREAKKIEIHFDRQLGILQASIQALGEDKQAPSFQTSVLVKLFSGLEKEDGEIPGRCEREAEDAEESTLLPELVDAEADRCLITRCFNVQTVPGVSKGSLEITNTEERSLENSKQDEPEQVTSEYDYPLDMQEPSIQNQASDLNNIKEDSAFARDREQDRRMPFNDRNHDLLESNEDSSLSTNERSWTQNHKRKSLRTYSQRKKQRVSSLRILPLSPIRSGHAPEKDEAELVPLWKGISRRNDSTLLKISETKLRGSSVLLTSGASTQKIGLEKPERRGSEPSSSTKKTRVTDGLHWREPRSPHPSSGPSSLEYLEVEENIPEIVNRESFMGNSSFKHKLENLGHREIPDGSVAALKQSRLEDAPGSPVVTDTSTPSQEDMPGSVNGSAFKTAFENFTRDLKRKFELELKQREIPFSLEKAKEAPACLIRLWNQIHTCRLDTLERFHSSVLRELSGLEKNLQTLKCLEKDALASLLFVLSLGRERTFSR.

Disordered stretches follow at residues 451-473, 505-560, 619-666, and 715-738; these read GSLE…EPEQ, FARD…KQRV, STQK…SSLE, and EDAP…PGSV. Composition is skewed to basic and acidic residues over residues 458–470 and 505–525; these read TEER…KQDE and FARD…HDLL. Residues 543 to 559 show a composition bias toward basic residues; it reads NHKRKSLRTYSQRKKQR. Basic and acidic residues-rich tracts occupy residues 624–633 and 643–655; these read GLEKPERRGS and RVTD…EPRS.

The protein belongs to the SYCP2 family. As to expression, specifically expressed in oocytes.

It is found in the nucleus. It localises to the chromosome. The protein resides in the centromere. Oocyte-specific protein that localizes to centromeres at the dictyate stage and regulates the survival of primordial oocytes. The protein is Synaptonemal complex protein 2-like of Mus musculus (Mouse).